A 519-amino-acid chain; its full sequence is Anthranilate synthase component 1 (519 aa).

Residues T40 and 293 to 295 (PYM) contribute to the L-tryptophan site. Position 330-331 (330-331 (GT)) interacts with chorismate. E363 lines the Mg(2+) pocket. Residues Y451, R471, 485–487 (GSG), and G487 contribute to the chorismate site. E500 is a Mg(2+) binding site.

The protein belongs to the anthranilate synthase component I family. Heterotetramer consisting of two non-identical subunits: a beta subunit (TrpG) and a large alpha subunit (TrpE). Mg(2+) serves as cofactor.

The enzyme catalyses chorismate + L-glutamine = anthranilate + pyruvate + L-glutamate + H(+). The protein operates within amino-acid biosynthesis; L-tryptophan biosynthesis; L-tryptophan from chorismate: step 1/5. Feedback inhibited by tryptophan. Part of a heterotetrameric complex that catalyzes the two-step biosynthesis of anthranilate, an intermediate in the biosynthesis of L-tryptophan. In the first step, the glutamine-binding beta subunit (TrpG) of anthranilate synthase (AS) provides the glutamine amidotransferase activity which generates ammonia as a substrate that, along with chorismate, is used in the second step, catalyzed by the large alpha subunit of AS (TrpE) to produce anthranilate. In the absence of TrpG, TrpE can synthesize anthranilate directly from chorismate and high concentrations of ammonia. This is Anthranilate synthase component 1 (trpE) from Buchnera aphidicola subsp. Diuraphis noxia.